A 147-amino-acid chain; its full sequence is Large ribosomal subunit protein uL13 (147 aa).

The protein belongs to the universal ribosomal protein uL13 family. In terms of assembly, part of the 50S ribosomal subunit.

Its function is as follows. This protein is one of the early assembly proteins of the 50S ribosomal subunit, although it is not seen to bind rRNA by itself. It is important during the early stages of 50S assembly. The chain is Large ribosomal subunit protein uL13 from Corynebacterium glutamicum (strain R).